The sequence spans 956 residues: RNA-silencing factor ers1 (956 aa).

The protein localises to the cytoplasm. It is found in the cytoskeleton. Its subcellular location is the microtubule organizing center. The protein resides in the spindle pole body. In terms of biological role, involved in RNAi-dependent heterochromatin formation and centromeric silencing. Required for the conversion of centromeric pre-small interfering RNA transcripts into small interfering RNAs, histone H3 'Lys9' methylation, and the recruitment of the RITS complex to centromeric sequences. This Schizosaccharomyces pombe (strain 972 / ATCC 24843) (Fission yeast) protein is RNA-silencing factor ers1 (ers1).